A 928-amino-acid chain; its full sequence is Echinoderm microtubule-associated protein-like 4 (928 aa).

The tract at residues 1–189 is microtubule-binding; the sequence is MDGFAGSLDD…IPSDVENYDD (189 aa). The stretch at 14–63 forms a coiled coil; it reads AASTSDVQDRLSALELRVQQQEDEITVLKAALADVLRRLAISEDQVATVR. Positions 107–131 are disordered; that stretch reads SAAKSVKRSSTIEKSHNSWDASEES. The span at 116–131 shows a compositional bias: basic and acidic residues; the sequence is STIEKSHNSWDASEES. WD repeat units lie at residues 199–237, 241–288, 296–336, 343–378, 385–424, 442–480, 485–521, 524–563, 567–604, 610–646, 653–692, 702–760, and 767–806; these read LKLE…LFNY, TQRH…VWDS, VIGL…VWDW, AEIK…FWTW, RKQG…IWSK, QISR…MWDH, EREI…LRGT, DGFQ…LWNS, SLEW…VLDA, VSIH…LYNV, YSRY…YWDI, RSDC…LFQY, and APSH…QWRL. Positions 821-928 are disordered; that stretch reads SSSAVNSPVV…ENQDDSSPLS (108 aa). A compositionally biased stretch (polar residues) spans 836 to 845; the sequence is QPNTPTNLPQ. Acidic residues predominate over residues 867–876; it reads DALEQPEELN. The segment covering 877–898 has biased composition (polar residues); it reads EVQSEKCSSQPEGANGQEPSNE.

Belongs to the WD repeat EMAP family. As to quaternary structure, homotrimer; self-association is mediated by the N-terminal coiled coil.

It localises to the cytoplasm. The protein localises to the cytoskeleton. The protein resides in the spindle. Its subcellular location is the microtubule organizing center. It is found in the midbody. Functionally, essential for the formation and stability of microtubules (MTs). Required for the organization of the mitotic spindle and for the proper attachment of kinetochores to MTs. Promotes the recruitment of NUDC to the mitotic spindle for mitotic progression. The sequence is that of Echinoderm microtubule-associated protein-like 4 (eml4) from Xenopus tropicalis (Western clawed frog).